The sequence spans 1137 residues: Dendrite extension defective protein 1 (1137 aa).

The N-terminal stretch at Met1 to Cys41 is a signal peptide. The Extracellular portion of the chain corresponds to Lys43–Ala1005. The 140-residue stretch at Pro163–Leu302 folds into the NIDO 1 domain. Asn240 and Asn416 each carry an N-linked (GlcNAc...) asparagine glycan. One can recognise an EGF-like; calcium-binding domain in the interval Asp409–Ser450. Disulfide bonds link Cys413-Cys426, Cys420-Cys435, and Cys437-Cys449. The 141-residue stretch at Pro519 to Ala659 folds into the NIDO 2 domain. Asn571 carries N-linked (GlcNAc...) asparagine glycosylation. Positions Ile738 to Ala749 are enriched in polar residues. Disordered regions lie at residues Ile738–Ile765, Phe795–Ala856, Gln878–Ser897, Thr906–His933, and Asn978–Glu998. Asn756 carries an N-linked (GlcNAc...) asparagine glycan. Over residues Asn798–Arg809 the composition is skewed to polar residues. Residues Pro819 to Thr833 are compositionally biased toward basic and acidic residues. Positions Thr906–Ile915 are enriched in acidic residues. The span at Ser916 to His933 shows a compositional bias: low complexity. Over residues Asn978–Val992 the composition is skewed to polar residues. A helical membrane pass occupies residues Ile1006–Val1026. Over Val1027 to Ser1037 the chain is Cytoplasmic. The disordered stretch occupies residues Ala1106–Thr1125.

In terms of processing, may be proteolytically cleaved and secreted.

The protein localises to the membrane. It localises to the cell projection. The protein resides in the dendrite. It is found in the secreted. Functionally, along with dyf-7, enables neurite growth and maintenance by anchoring amphid dendritic tips during neuron cell body migration in embryonic and larval development. Promotes seam cell remodeling during the dauer phase. Plays a role in positively regulating locomotion during the dauer phase. The polypeptide is Dendrite extension defective protein 1 (Caenorhabditis elegans).